A 110-amino-acid polypeptide reads, in one-letter code: Ribonuclease (110 aa).

Glu73 (proton acceptor) is an active-site residue. His102 serves as the catalytic Proton donor.

It belongs to the ribonuclease N1/T1 family.

It is found in the secreted. Hydrolyzes phosphodiester bonds in RNA, poly- and oligoribonucleotides resulting in 3'-nucleoside monophosphates via 2',3'-cyclophosphate intermediates. In Niallia circulans (Bacillus circulans), this protein is Ribonuclease.